The primary structure comprises 301 residues: Hydrogen peroxide-inducible genes activator (301 aa).

The HTH lysR-type domain maps to 1–58; it reads MNIRDLEYLVALSEYKHFRRAADSCNVSQPTLSGQIRKLEDELGIILLERTSRKVLFT. Residues 18–37 constitute a DNA-binding region (H-T-H motif); sequence FRRAADSCNVSQPTLSGQIR.

This sequence belongs to the LysR transcriptional regulatory family.

Its function is as follows. Required for the induction of a regulon of hydrogen peroxide inducible genes such as catalase and glutathione-reductase. The polypeptide is Hydrogen peroxide-inducible genes activator (oxyR) (Haemophilus influenzae (strain ATCC 51907 / DSM 11121 / KW20 / Rd)).